A 206-amino-acid polypeptide reads, in one-letter code: GTP-binding protein YPTC5 (206 aa).

15–22 (GDSGVGKT) provides a ligand contact to GTP. Positions 37 to 45 (YKATIGADF) match the Effector region motif. Residues 63 to 67 (DTAGQ) and 125 to 128 (NKID) each bind GTP. 2 S-geranylgeranyl cysteine lipidation sites follow: C205 and C206.

This sequence belongs to the small GTPase superfamily. Rab family.

The protein localises to the cell membrane. In terms of biological role, protein transport. Probably involved in vesicular traffic. The protein is GTP-binding protein YPTC5 (YPTC5) of Chlamydomonas reinhardtii (Chlamydomonas smithii).